Consider the following 154-residue polypeptide: 6,7-dimethyl-8-ribityllumazine synthase (154 aa).

Residues Phe23, 57 to 59, and 81 to 83 each bind 5-amino-6-(D-ribitylamino)uracil; these read AFE and AII. Residue 86 to 87 coordinates (2S)-2-hydroxy-3-oxobutyl phosphate; it reads ST. The Proton donor role is filled by His89. Phe114 contributes to the 5-amino-6-(D-ribitylamino)uracil binding site. (2S)-2-hydroxy-3-oxobutyl phosphate is bound at residue Arg128.

The protein belongs to the DMRL synthase family.

The catalysed reaction is (2S)-2-hydroxy-3-oxobutyl phosphate + 5-amino-6-(D-ribitylamino)uracil = 6,7-dimethyl-8-(1-D-ribityl)lumazine + phosphate + 2 H2O + H(+). It participates in cofactor biosynthesis; riboflavin biosynthesis; riboflavin from 2-hydroxy-3-oxobutyl phosphate and 5-amino-6-(D-ribitylamino)uracil: step 1/2. Functionally, catalyzes the formation of 6,7-dimethyl-8-ribityllumazine by condensation of 5-amino-6-(D-ribitylamino)uracil with 3,4-dihydroxy-2-butanone 4-phosphate. This is the penultimate step in the biosynthesis of riboflavin. This chain is 6,7-dimethyl-8-ribityllumazine synthase, found in Nitratiruptor sp. (strain SB155-2).